The chain runs to 692 residues: MEEEKVKEGLWELAYNLWWTWNPPAKELFRSIDPLLWKETKENPIELLRKTKLLENKLKDEDFISHFKYVYSLYKTYMNRHSKYEDTYKKPIVFLSPEYGLHHTLLIYAGGLGFLAGDILKESSDLGFPLIGVGFMYPQGYVKQRIRVDGWQEDLDAQNQKELMPVKKVLDKEGKWLKCYVYVRDEKVYFGVWEVNVGKTKLYLLDTNVEENTPWNREISSRLYVPDKDLRLRQQIVLGFGTVILLEKLGIDAGGFHINEDYPSFVFLAEIFKLLKKGLTWDKAIEEVRKISLFTTHTPLRVAVNTYPFHMIEEQFLFVKDVYGIDVKKVLELGTNPEDPSEGFNSTIMSLRLAKYVNAVSKRHQEVSSKMWSFLFKEKENPIDYVTNGVHFPTWICSDLRRLYEEYLGENFVELHDHKSLWELIRDIPDEELWEYHIRNKERLIEHIKDRARERWVKEKADPSILMAEGLFLDSDVLTVGFARRMTGYKRPDLIFTDVERLKKIVNDSERPVQIIFAGKAHPADIEGKKIIQRIFNFAKDPEFGGRIAFVEDYDELLAHYMVRGVDVWLNNPLPPLEACGTSGMKASMNGVLHLSILDGWWIEGYNGKNGWAFGDYEVEGDRNRADAEAIYNILENEVIPLYYERDERGVPVKWISMMKEAIKSITPNFCSRRMLKDYINKFYSKILKEEG.

Residue Lys-586 is modified to N6-(pyridoxal phosphate)lysine.

This sequence belongs to the glycogen phosphorylase family. The cofactor is pyridoxal 5'-phosphate.

The catalysed reaction is [(1-&gt;4)-alpha-D-glucosyl](n) + phosphate = [(1-&gt;4)-alpha-D-glucosyl](n-1) + alpha-D-glucose 1-phosphate. Functionally, phosphorylase is an important allosteric enzyme in carbohydrate metabolism. Enzymes from different sources differ in their regulatory mechanisms and in their natural substrates. However, all known phosphorylases share catalytic and structural properties. In Aquifex aeolicus (strain VF5), this protein is Glycogen phosphorylase (glgP).